The primary structure comprises 239 residues: MSLIEDCLRSYRFIAIDTEFPSTLRETTQHATDEERYMDMSFSVDRAKLIQLGLTLFDINGRIGGTWEINFSDFGVDDARNEKSIEFLRRNGLDLRKIREEGIRIEGFFSEMFWMLKKTRRNITWVTFHGSYDIAYLLKGFTGEALPVTSERFSKAVARVLGSVYDLKVMAGRCEGLSSRLGLETLAHEFGLNRVGTAHHAGSNNELTAMVFAKVLSPFPLFLRFGSLELRTIESEAIV.

Residues D17, E19, D133, and N204 each contribute to the a divalent metal cation site.

Belongs to the CAF1 family. As to quaternary structure, component of the CCR4-NOT complex, at least composed of CRR4 and CAF1 proteins. Requires a divalent metal cation as cofactor.

The protein localises to the nucleus. It is found in the cytoplasm. The catalysed reaction is Exonucleolytic cleavage of poly(A) to 5'-AMP.. Ubiquitous transcription factor required for a diverse set of processes. It is a component of the CCR4 complex involved in the control of gene expression. The protein is Putative CCR4-associated factor 1 homolog 8 (CAF1-8) of Arabidopsis thaliana (Mouse-ear cress).